Consider the following 876-residue polypeptide: MNEKYAALKSNVSMLGRLLGNTIQDAHGDVILEKVETIRKLSKSARAGNKADRDSLVEEIKNLPNEQLTPVARAFNQFLNLTNMAEQYHTISRHCEEHVCEPDVLQSLFSKLNQNDISKLDAAQAVRDLNIELVLTAHPTEITRRTMINKLVKINECLSKLELSDLSHKERAKTERRLEQLIAQGWHSDVIRQQRPTPLDEAKWGFAVVENSLWEAVPDFLREMDGRLKGYLGEGLPIDARPVHFSSWMGGDRDGNPFVTHTITKEVLRLSRWKAADLYLGDVNELITELSMTKCNDAVRELAGDEHEAYRAILKSLRTLLNNTLEVLDAKLHDAEVPKKETLQNIDQLWTPLYACYQSLHECGMGVIADGSLLDTLRRLKAFGVHLVRLDVRQESTRHSDVLSELTRYLGIGDYDQWSEQDKVAFLTNELSSKRPLLPRDWEPSEQVKEVLDTCKVVAAQPREAFGAYVISMARTASDVLAVHLLLQECGCPYRMDVCPLFETLDDLNNSEAVMKQLMSIDLYRGFIQNHQMVMIGYSDSAKDAGVMSAGWAQYDAMDKLVKACEEEGIELTLFHGRGGTVGRGGAPAHAALLSQPPKSLKGGLRVTEQGEMIRFKLGLPDVAVNSFNLYASAILEANLLPPPEPKQEWRDLMEVLSEVSCEAYRNVVRGEEKFVPYFRQATPELELGKLPLGSRPAKRNPNGGVESLRAIPWIFSWSQNRLVLPAWLGAGEAIQYSVDQGHQALLEEMCREWPFFSTRLGMLEMVYSKCNMEIAKYYDQRLVDEELLPLGELLREQLQKDIKAVLNVENNENLMQSDPWGLESIRLRNIYVEPLNMLQAELLYRTRKCETPPAELEEALMVTIAGIAAGMRNTG.

Active-site residues include H138 and K543.

The protein belongs to the PEPCase type 1 family. Mg(2+) is required as a cofactor.

It carries out the reaction oxaloacetate + phosphate = phosphoenolpyruvate + hydrogencarbonate. Functionally, forms oxaloacetate, a four-carbon dicarboxylic acid source for the tricarboxylic acid cycle. In Vibrio atlanticus (strain LGP32) (Vibrio splendidus (strain Mel32)), this protein is Phosphoenolpyruvate carboxylase.